The primary structure comprises 88 residues: Elongation factor 1-beta (88 aa).

This sequence belongs to the EF-1-beta/EF-1-delta family.

In terms of biological role, promotes the exchange of GDP for GTP in EF-1-alpha/GDP, thus allowing the regeneration of EF-1-alpha/GTP that could then be used to form the ternary complex EF-1-alpha/GTP/AAtRNA. This is Elongation factor 1-beta (ef1b) from Thermoplasma acidophilum (strain ATCC 25905 / DSM 1728 / JCM 9062 / NBRC 15155 / AMRC-C165).